The primary structure comprises 512 residues: Putative UDP-glucuronosyltransferase ugt-55 (512 aa).

The N-terminal stretch at 1–22 (MQLLTLPTLIFIFLNYGTPCLS) is a signal peptide. The chain crosses the membrane as a helical span at residues 487–507 (ILLYLDSIAMFTLTLLTMILI).

Belongs to the UDP-glycosyltransferase family.

It localises to the membrane. It carries out the reaction glucuronate acceptor + UDP-alpha-D-glucuronate = acceptor beta-D-glucuronoside + UDP + H(+). This Caenorhabditis elegans protein is Putative UDP-glucuronosyltransferase ugt-55 (ugt-55).